A 118-amino-acid chain; its full sequence is Small ribosomal subunit protein uS13 (118 aa).

Residues 91-118 are disordered; that stretch reads HRRSLPVRGQRTKTNARTRKGPRKPIKA.

It belongs to the universal ribosomal protein uS13 family. Part of the 30S ribosomal subunit. Forms a loose heterodimer with protein S19. Forms two bridges to the 50S subunit in the 70S ribosome.

Located at the top of the head of the 30S subunit, it contacts several helices of the 16S rRNA. In the 70S ribosome it contacts the 23S rRNA (bridge B1a) and protein L5 of the 50S subunit (bridge B1b), connecting the 2 subunits; these bridges are implicated in subunit movement. Contacts the tRNAs in the A and P-sites. The polypeptide is Small ribosomal subunit protein uS13 (Francisella philomiragia subsp. philomiragia (strain ATCC 25017 / CCUG 19701 / FSC 153 / O#319-036)).